We begin with the raw amino-acid sequence, 453 residues long: Pup--protein ligase (453 aa).

Glu-9 contacts Mg(2+). An ATP-binding site is contributed by Arg-53. Residue Tyr-55 coordinates Mg(2+). Asp-57 functions as the Proton acceptor in the catalytic mechanism. Glu-63 serves as a coordination point for Mg(2+). ATP-binding residues include Thr-66 and Trp-420.

The protein belongs to the Pup ligase/Pup deamidase family. Pup-conjugating enzyme subfamily.

The catalysed reaction is ATP + [prokaryotic ubiquitin-like protein]-L-glutamate + [protein]-L-lysine = ADP + phosphate + N(6)-([prokaryotic ubiquitin-like protein]-gamma-L-glutamyl)-[protein]-L-lysine.. It participates in protein degradation; proteasomal Pup-dependent pathway. Its pathway is protein modification; protein pupylation. Functionally, catalyzes the covalent attachment of the prokaryotic ubiquitin-like protein modifier Pup to the proteasomal substrate proteins, thereby targeting them for proteasomal degradation. This tagging system is termed pupylation. The ligation reaction involves the side-chain carboxylate of the C-terminal glutamate of Pup and the side-chain amino group of a substrate lysine. The polypeptide is Pup--protein ligase (Streptomyces scabiei (strain 87.22)).